The following is a 716-amino-acid chain: Ciliary WD repeat-containing protein ctxp80 (716 aa).

A disordered region spans residues Met-1–Glu-53. Polar residues predominate over residues Gly-8–Asn-21. Positions Glu-23 to Glu-53 are enriched in basic and acidic residues. WD repeat units lie at residues Tyr-167–Arg-208, Lys-213–Lys-254, Ser-257–Lys-297, Gly-305–Asp-343, His-345–Thr-382, His-424–Leu-462, Asp-529–Thr-568, Ala-571–Ser-610, Thr-639–Pro-678, and Gly-683–Lys-715.

The protein belongs to the WD repeat EMAP family.

The protein is Ciliary WD repeat-containing protein ctxp80 of Euplotoides octocarinatus (Freshwater ciliate).